Consider the following 151-residue polypeptide: 3-hydroxyacyl-[acyl-carrier-protein] dehydratase FabZ (151 aa).

Residue His54 is part of the active site.

The protein belongs to the thioester dehydratase family. FabZ subfamily. In terms of assembly, oligomer. Post-translationally, the N-terminus is blocked.

The protein resides in the cytoplasm. It carries out the reaction a (3R)-hydroxyacyl-[ACP] = a (2E)-enoyl-[ACP] + H2O. Its function is as follows. Involved in unsaturated fatty acids biosynthesis. Catalyzes the dehydration of short chain beta-hydroxyacyl-ACPs and long chain saturated and unsaturated beta-hydroxyacyl-ACPs. The protein is 3-hydroxyacyl-[acyl-carrier-protein] dehydratase FabZ of Escherichia coli (strain SE11).